A 326-amino-acid chain; its full sequence is ATP synthase gamma chain (326 aa).

It belongs to the ATPase gamma chain family. As to quaternary structure, F-type ATPases have 2 components, CF(1) - the catalytic core - and CF(0) - the membrane proton channel. CF(1) has five subunits: alpha(3), beta(3), gamma(1), delta(1), epsilon(1). CF(0) has three main subunits: a, b and c.

It is found in the cell membrane. Its function is as follows. Produces ATP from ADP in the presence of a proton gradient across the membrane. The gamma chain is believed to be important in regulating ATPase activity and the flow of protons through the CF(0) complex. The protein is ATP synthase gamma chain of Rhodococcus jostii (strain RHA1).